The following is a 128-amino-acid chain: Diacylglycerol kinase (128 aa).

E34 lines the a divalent metal cation pocket. Transmembrane regions (helical) follow at residues S35 to A55 and F58 to N78. E75 acts as the Proton acceptor in catalysis. E82 contributes to the a divalent metal cation binding site. The chain crosses the membrane as a helical span at residues Q107–L127.

Belongs to the bacterial diacylglycerol kinase family. Mg(2+) serves as cofactor.

The protein resides in the cell inner membrane. The catalysed reaction is a 1,2-diacyl-sn-glycerol + ATP = a 1,2-diacyl-sn-glycero-3-phosphate + ADP + H(+). Its function is as follows. Catalyzes the ATP-dependent phosphorylation of sn-l,2-diacylglycerol (DAG) to phosphatidic acid. Involved in the recycling of diacylglycerol produced as a by-product during membrane-derived oligosaccharide (MDO) biosynthesis. This chain is Diacylglycerol kinase (dgkA), found in Helicobacter pylori (strain ATCC 700392 / 26695) (Campylobacter pylori).